The chain runs to 274 residues: Formamidopyrimidine-DNA glycosylase (274 aa).

Residue P2 is the Schiff-base intermediate with DNA of the active site. E3 serves as the catalytic Proton donor. The active-site Proton donor; for beta-elimination activity is K58. Positions 91, 110, and 152 each coordinate DNA. The FPG-type zinc finger occupies 237-271 (KVYGRKNLPCLVCENKIETVVIAGRHSAFCPHCQP). Catalysis depends on R261, which acts as the Proton donor; for delta-elimination activity.

Belongs to the FPG family. As to quaternary structure, monomer. The cofactor is Zn(2+).

It carries out the reaction Hydrolysis of DNA containing ring-opened 7-methylguanine residues, releasing 2,6-diamino-4-hydroxy-5-(N-methyl)formamidopyrimidine.. It catalyses the reaction 2'-deoxyribonucleotide-(2'-deoxyribose 5'-phosphate)-2'-deoxyribonucleotide-DNA = a 3'-end 2'-deoxyribonucleotide-(2,3-dehydro-2,3-deoxyribose 5'-phosphate)-DNA + a 5'-end 5'-phospho-2'-deoxyribonucleoside-DNA + H(+). In terms of biological role, involved in base excision repair of DNA damaged by oxidation or by mutagenic agents. Acts as a DNA glycosylase that recognizes and removes damaged bases. Has a preference for oxidized purines, such as 7,8-dihydro-8-oxoguanine (8-oxoG). Has AP (apurinic/apyrimidinic) lyase activity and introduces nicks in the DNA strand. Cleaves the DNA backbone by beta-delta elimination to generate a single-strand break at the site of the removed base with both 3'- and 5'-phosphates. The sequence is that of Formamidopyrimidine-DNA glycosylase from Legionella pneumophila subsp. pneumophila (strain Philadelphia 1 / ATCC 33152 / DSM 7513).